We begin with the raw amino-acid sequence, 417 residues long: Creatine kinase U-type, mitochondrial (417 aa).

Residues 1–39 constitute a mitochondrion transit peptide; it reads MAGPFSRLLSARPGLRLLALAGAGSLAAGFLLRPEPVRA. Residues 40 to 64 form a cardiolipin-binding region; it reads ASERRRLYPPSAEYPDLRKHNNCMA. The Phosphagen kinase N-terminal domain maps to 45-131; it reads RLYPPSAEYP…FDPVIQERHN (87 aa). Ser-151 carries the post-translational modification Phosphoserine. The 243-residue stretch at 158 to 400 folds into the Phosphagen kinase C-terminal domain; the sequence is YVLSSRVRTG…NYLIDCERRL (243 aa). 161–165 is a binding site for ATP; the sequence is SSRVR. At Ser-196 the chain carries Phosphoserine. Thr-213 carries the post-translational modification Phosphothreonine. Residue His-224 coordinates ATP. A Phosphoserine modification is found at Ser-232. Residues Arg-269, Arg-325, 353–358, and Asp-368 contribute to the ATP site; that span reads RGTGGV. A Phosphothreonine modification is found at Thr-355.

Belongs to the ATP:guanido phosphotransferase family. As to quaternary structure, exists as an octamer composed of four MTCK homodimers.

The protein resides in the mitochondrion inner membrane. The catalysed reaction is creatine + ATP = N-phosphocreatine + ADP + H(+). Reversibly catalyzes the transfer of phosphate between ATP and various phosphogens (e.g. creatine phosphate). Creatine kinase isoenzymes play a central role in energy transduction in tissues with large, fluctuating energy demands, such as skeletal muscle, heart, brain and spermatozoa. In Homo sapiens (Human), this protein is Creatine kinase U-type, mitochondrial (CKMT1A).